Here is a 456-residue protein sequence, read N- to C-terminus: Antizyme inhibitor 2 (456 aa).

Cys-357 acts as the Proton donor; shared with dimeric partner in catalysis.

Belongs to the Orn/Lys/Arg decarboxylase class-II family. ODC antizyme inhibitor subfamily. Monomer. Interacts with OAZ1; this interaction disrupts the interaction between the antizyme and ODC1. Does not form a heterodimer with ODC1.

Its subcellular location is the nucleus. The protein localises to the cytoplasm. It localises to the perinuclear region. The protein resides in the membrane. It is found in the cytoplasmic vesicle. Its subcellular location is the endoplasmic reticulum-Golgi intermediate compartment. The protein localises to the golgi apparatus. It localises to the cis-Golgi network. The protein resides in the trans-Golgi network. It is found in the cytoplasmic granule. Its subcellular location is the cell projection. The protein localises to the axon. It localises to the dendrite. The protein resides in the perikaryon. In terms of biological role, antizyme inhibitor (AZI) protein that positively regulates ornithine decarboxylase (ODC) activity and polyamine uptake. AZI is an enzymatically inactive ODC homolog that counteracts the negative effect of ODC antizyme (AZ) on ODC activity by competing with ODC for antizyme-binding. Inhibits antizyme-dependent ODC degradation and releases ODC monomers from their inactive complex with antizymes, leading to formation of the catalytically active ODC homodimer and restoring polyamine production. Participates in the morphological integrity of the trans-Golgi network (TGN) and functions as a regulator of intracellular secretory vesicle trafficking. The chain is Antizyme inhibitor 2 (azin2) from Xenopus laevis (African clawed frog).